We begin with the raw amino-acid sequence, 853 residues long: Eukaryotic translation initiation factor 3 subunit C (853 aa).

The tract at residues 1–78 is disordered; the sequence is MSRFFAASDS…EDEDQNKVLK (78 aa). The segment covering 11-46 has biased composition (acidic residues); it reads SSEESSEEELYSDNEASAQEDSDKDSDDDDSDDDDS. The PCI domain maps to 599–773; the sequence is FHMHINLELL…SAIIFRKGVE (175 aa). Residues 798-853 form a disordered region; that stretch reads TLEQRTQGTANAFERQGGRGGRGGGRGRGGGRGGGVPRGGRNQQFTGGALGRAIQA. Residues 815–835 show a composition bias toward gly residues; it reads GRGGRGGGRGRGGGRGGGVPR.

It belongs to the eIF-3 subunit C family. As to quaternary structure, component of the eukaryotic translation initiation factor 3 (eIF-3) complex.

Its subcellular location is the cytoplasm. Its function is as follows. Component of the eukaryotic translation initiation factor 3 (eIF-3) complex, which is involved in protein synthesis of a specialized repertoire of mRNAs and, together with other initiation factors, stimulates binding of mRNA and methionyl-tRNAi to the 40S ribosome. The eIF-3 complex specifically targets and initiates translation of a subset of mRNAs involved in cell proliferation. The polypeptide is Eukaryotic translation initiation factor 3 subunit C (Phaeosphaeria nodorum (strain SN15 / ATCC MYA-4574 / FGSC 10173) (Glume blotch fungus)).